Here is a 302-residue protein sequence, read N- to C-terminus: Sushi domain-containing protein 6 (302 aa).

The N-terminal stretch at 1 to 39 is a signal peptide; sequence MCHGKIAPKSSSEFVVTSVGHGVFLQLVILCALLGDGLA. Residues 40-104 form the Sushi domain; it reads SVCPLPPEPE…TPAMEVSCHL (65 aa). 2 disulfides stabilise this stretch: cysteine 42/cysteine 89 and cysteine 74/cysteine 102. A helical membrane pass occupies residues 120–140; it reads IVASTASSVALILLLVVLFVL. 2 disordered regions span residues 202–241 and 256–302; these read GSAP…CEAW and TSSW…LKEA. 3 stretches are compositionally biased toward polar residues: residues 212-222, 256-267, and 279-290; these read REQQLQGQEAC, TSSWVAGSGSSR, and SDIQSLLSLTSE.

It is found in the membrane. In terms of biological role, may play a role in growth-suppressive activity and cell death. May be involved in the production of chemokine molecules in umbilical vein endothelial cells (HUVECs) cultured in THP1 monocyte LPS-induced medium. Plays a role in preventing tumor onset. This chain is Sushi domain-containing protein 6, found in Mus musculus (Mouse).